Reading from the N-terminus, the 878-residue chain is MSDQPTPMMAQYLAIREANPGALLFYRMGDFYEMFFEDAVAAAAALDIALTKRGTHLGEPIPMCGVPVHAAESYLLTLIRKGFRVAIAEQMEDPAEAKKRGSKSVVARDVVRLVTPGTLTEESLLEARRHNFLASFASVRDESALAWVDISTGAFRVMPCPPARLAPELARHAPRELLAAEGANLDEIAAEAGAALTELPGGSFDSSAATRRLCALFSVETLDGFGQFSRAELAAMGAIADYLELTQKGRMPLIRPPVREALGGAMQIDAATRRNLELTQALSGGREGSLLAAIDRSVTAGGARLLERRISAPSRDLDEIHARQAAVAHLVDEPRLTADLREALSRAPDMDRALSRLALERGGPRDLAAIRAGLTQGAAIAAMLGNDEIAVLAEAAHDLTGHDALIDLLDEALVAEPPLLARDGGFVAPGYDEDLDETRRLRDEGRGVIARMQADYIAETGVQSLKIKHNNVLGYFIETTSTHAERMLAPPLNERFIHRQTTANQIRFTTVELSELETRILNARDRALEIEREIFARLSRAVLDRAGPVGQAARALAEIDLTAAFADLASGEGWVRPEVDASRAFVIEGGRHPVVERALKRKGEAFVANDCALTQGETPAIWLLTGPNMAGKSTFLRQNALIAILAQAGGFVPARRAHIGLVSQLFSRVGAADDLARGRSTFMVEMVETAAILNQADDHALVILDEIGRGTATWDGLSIAWAVMEHLHATNRCRALFATHYHEMTSLSARLPGVENATVAVREWEGEVIFLHEVRKGAADRSYGVQVARLAGLPPSVVDRARDILHQLESGERQGTGKPAALLDDLPLFRAAPAPAPAGKAKPSVVEDRLRSLNPDTISAREALDLVYELRGMLDGEP.

Residue 626–633 participates in ATP binding; that stretch reads GPNMAGKS.

Belongs to the DNA mismatch repair MutS family.

In terms of biological role, this protein is involved in the repair of mismatches in DNA. It is possible that it carries out the mismatch recognition step. This protein has a weak ATPase activity. This Paracoccus denitrificans (strain Pd 1222) protein is DNA mismatch repair protein MutS.